The chain runs to 337 residues: Phenylpyruvate C(3)-methyltransferase (337 aa).

It belongs to the methyltransferase superfamily.

The catalysed reaction is 3-phenylpyruvate + S-adenosyl-L-methionine = (3S)-2-oxo-3-phenylbutanoate + S-adenosyl-L-homocysteine + H(+). It functions in the pathway antibiotic biosynthesis. Functionally, S-adenosyl-L-methionine-dependent methyltransferase involved in synthesis of the nonproteinogenic amino acid (2S,3S)-beta-methyl-phenylalanine, a building block of the antibiotic mannopeptimycin. The polypeptide is Phenylpyruvate C(3)-methyltransferase (mppJ) (Streptomyces hygroscopicus).